Reading from the N-terminus, the 63-residue chain is Large ribosomal subunit protein bL33 (63 aa).

It belongs to the bacterial ribosomal protein bL33 family.

The polypeptide is Large ribosomal subunit protein bL33 (Gloeobacter violaceus (strain ATCC 29082 / PCC 7421)).